We begin with the raw amino-acid sequence, 372 residues long: MPLPDFHVSEPFTLGIELEMQVVNPPGYDLSQDSSMLIDAVKNKITAGEVKHDITESMLELATDVCRDINQAAGQFSAMQKVVLQAAADHHLEICGGGTHPFQKWQRQEVCDNERYQRTLENFGYLIQQATVFGQHVHVGCASGDDAIYLLHGLSRFVPHFIALSAASPYMQGTDTRFASSRPNIFSAFPDNGPMPWVSNWQQFEALFRCLSYTTMIDSIKDLHWDIRPSPHFGTVEVRVMDTPLTLSHAVNMAGLIQATAHWLLTERPFKHQEKDYLLYKFNRFQACRYGLEGVITDPHTGDRRSLTEDTLRLLEKIAPSAHKIGASSAIEALHRQVVSGLNEAQLMRDFVADGGSLIGLVKKHCEIWTGE.

This sequence belongs to the glutamate--cysteine ligase type 2 family. YbdK subfamily. In terms of assembly, homodimer.

It catalyses the reaction L-cysteine + L-glutamate + ATP = gamma-L-glutamyl-L-cysteine + ADP + phosphate + H(+). Its function is as follows. ATP-dependent carboxylate-amine ligase which exhibits weak glutamate--cysteine ligase activity. The protein is Putative glutamate--cysteine ligase 2 (ybdK) of Escherichia coli O17:K52:H18 (strain UMN026 / ExPEC).